The chain runs to 504 residues: DnaJ homolog subfamily C member 3 (504 aa).

The N-terminal stretch at 1-31 is a signal peptide; it reads MVAPGSVTSRLGSVFPFLLVLVDLQYEGAEC. TPR repeat units lie at residues 37-70, 72-104, 105-138, 154-187, 189-221, 222-255, 268-301, 306-339, and 340-373; these read VEKH…DPDN, IAYY…KMDF, TAAR…NPSE, MQRL…CVWD, ELRE…KNDN, TEAF…DQDH, LNKL…EPGV, IRSK…EPDN, and VNAL…NEND. A disulfide bond links Cys-248 and Cys-258. The residue at position 274 (Ser-274) is a Phosphoserine. A disulfide bond links Cys-313 and Cys-329. The interval 375–393 is flexible linker; the sequence is QIREGLEKAQRLLKQSQRR. Residues 394 to 462 form the J domain; that stretch reads DYYKILGVKR…EMRKKFDDGE (69 aa). Residues 451–481 are disordered; that stretch reads DPEMRKKFDDGEDPLDAESQQGGGGNPFHRS.

In terms of assembly, interacts with EIF2AK4/GCN2; this interaction occurs under endoplasmic reticulum (ER) stress, hypothermic and amino acid starving stress conditions and inhibits EIF2AK4/GCN2 kinase activity. Interacts with EIF2AK3. Interacts with EIF2AK2. Forms a trimeric complex with DNAJB1 and HSPA8. Interacts with THAP12.

The protein localises to the endoplasmic reticulum. In terms of biological role, involved in the unfolded protein response (UPR) during endoplasmic reticulum (ER) stress. Acts as a negative regulator of the EIF2AK4/GCN2 kinase activity by preventing the phosphorylation of eIF-2-alpha at 'Ser-52' and hence attenuating general protein synthesis under ER stress, hypothermic and amino acid starving stress conditions. Co-chaperone of HSPA8/HSC70, it stimulates its ATPase activity. May inhibit both the autophosphorylation of EIF2AK2/PKR and the ability of EIF2AK2 to catalyze phosphorylation of the EIF2A. May inhibit EIF2AK3/PERK activity. The protein is DnaJ homolog subfamily C member 3 (DNAJC3) of Bos taurus (Bovine).